Consider the following 636-residue polypeptide: Cysteine-rich receptor-like protein kinase 24 (636 aa).

Residues 1–20 (MVKFLVIFWFVVISFSHVSA) form the signal peptide. 2 Gnk2-homologous domains span residues 21 to 124 (QVCL…NRSF) and 130 to 235 (MEIL…LYPF). Topologically, residues 21-254 (QVCLERSGFF…RQKDGKSIST (234 aa)) are extracellular. Asparagine 33, asparagine 50, asparagine 98, asparagine 101, asparagine 121, asparagine 137, asparagine 145, and asparagine 197 each carry an N-linked (GlcNAc...) asparagine glycan. The helical transmembrane segment at 255 to 275 (GAIVAIIVVPILLLALGVGLW) threads the bilayer. At 276–636 (KRRKAYKTKT…SVSVTCVSPR (361 aa)) the chain is on the cytoplasmic side. In terms of domain architecture, Protein kinase spans 312–585 (FHNVNKLGHG…TMSTVFHMLT (274 aa)). Residues 318–326 (LGHGGFGEV) and lysine 340 contribute to the ATP site. The active-site Proton acceptor is aspartate 437.

The protein belongs to the protein kinase superfamily. Ser/Thr protein kinase family. CRK subfamily.

The protein localises to the membrane. It carries out the reaction L-seryl-[protein] + ATP = O-phospho-L-seryl-[protein] + ADP + H(+). The enzyme catalyses L-threonyl-[protein] + ATP = O-phospho-L-threonyl-[protein] + ADP + H(+). This is Cysteine-rich receptor-like protein kinase 24 (CRK24) from Arabidopsis thaliana (Mouse-ear cress).